Here is a 548-residue protein sequence, read N- to C-terminus: Pentatricopeptide repeat-containing protein At5g15300 (548 aa).

PPR repeat units lie at residues 76–110 (DVSI…GVSP), 111–145 (DRYT…GFVL), 146–176 (NEYV…SAKA), 177–211 (HKVA…DQVA), 212–238 (WNVM…FTEK), 239–273 (DVVT…GEHP), 274–308 (DVVT…ASVS), 314–348 (GTPI…DLST), 349–378 (WNTL…KVWP), 379–409 (NEVT…MRDM), and 415–445 (NIKH…MKIE). The interval 450 to 525 (VWRTLLGACK…PTGVSLIEED (76 aa)) is type E motif.

The protein belongs to the PPR family. PCMP-E subfamily.

The polypeptide is Pentatricopeptide repeat-containing protein At5g15300 (PCMP-E40) (Arabidopsis thaliana (Mouse-ear cress)).